Reading from the N-terminus, the 346-residue chain is 4-hydroxy-2-oxovalerate aldolase 2 (346 aa).

The Pyruvate carboxyltransferase domain maps to 8–258 (VTLVDTTLRD…HTGVELFPLI (251 aa)). Substrate-binding positions include 16-17 (RD), Ser-170, and His-197. Asp-17 contacts Mn(2+). His-197 and His-199 together coordinate Mn(2+). Tyr-288 provides a ligand contact to substrate.

This sequence belongs to the 4-hydroxy-2-oxovalerate aldolase family.

The enzyme catalyses (S)-4-hydroxy-2-oxopentanoate = acetaldehyde + pyruvate. The sequence is that of 4-hydroxy-2-oxovalerate aldolase 2 from Nocardia farcinica (strain IFM 10152).